Consider the following 215-residue polypeptide: Sodium channel regulatory subunit beta-3 (215 aa).

The first 22 residues, 1–22 (MPAFNRLFPLVSLVLIYWASVC), serve as a signal peptide directing secretion. Topologically, residues 23–156 (FPVCVEVPSE…EEAGEDFTSV (134 aa)) are extracellular. The Ig-like C2-type domain maps to 24-138 (PVCVEVPSET…EAHRPFVKTT (115 aa)). Intrachain disulfides connect C26–C48 and C45–C120. N-linked (GlcNAc...) asparagine glycosylation is found at N95, N109, N113, and N121. Residues 157 to 178 (VSEIMMYILLVFLTLWLLIEMI) traverse the membrane as a helical segment. Residues 179 to 215 (YCYRKVSKAEEAAQENASDYLAIPSENKENSAVPVEE) lie on the Cytoplasmic side of the membrane.

This sequence belongs to the sodium channel auxiliary subunit SCN3B (TC 8.A.17) family. As to quaternary structure, a voltage-gated sodium (Nav) channel consists of an ion-conducting pore-forming alpha subunit functional on its own that is regulated by one or more beta subunits. Forms homodimers and homotrimers. SCN3B is non-covalently associated with alpha subunits and induces the formation of alpha subunit oligomers, including trimers. Interacts with SCN5A/Nav1.5; regulatory subunit of SCN5A/Nav1.5. Interacts with SCN7A/Nav2.1; probable regulatory subunit of SCN7A/Nav2.1. Interacts with SCN10A; regulatory subunit of SCN10A/Nav1.8. Interacts with NFASC; probably involved in targeting the sodium channels to the nodes of Ranvier. In terms of processing, intramolecular disulfide bonds favor the voltage-gated sodium channel oligomeric complex assembly. Post-translationally, N-glycosylated.

It localises to the cell membrane. Its function is as follows. Regulatory subunit of multiple voltage-gated sodium (Nav) channels directly mediating the depolarization of excitable membranes. Navs, also called VGSCs (voltage-gated sodium channels) or VDSCs (voltage-dependent sodium channels), operate by switching between closed and open conformations depending on the voltage difference across the membrane. In the open conformation they allow Na(+) ions to selectively pass through the pore, along their electrochemical gradient. The influx of Na+ ions provokes membrane depolarization, initiating the propagation of electrical signals throughout cells and tissues. The accessory beta subunits participate in localization and functional modulation of the Nav channels. Modulates the activity of SCN2A/Nav1.2, causing a hyperpolarizing shift in the voltage-dependence of inactivation of the channel and increasing the fraction of channels operating in the fast gating mode. Modulates the activity of SCN5A/Nav1.5. Could also regulate the atypical sodium channel SCN7A/Nav2.1. Modulates the activity of SCN10A/Nav1.8, regulating its oligomerization and accelerating the recovery from inactivation. In Macaca fascicularis (Crab-eating macaque), this protein is Sodium channel regulatory subunit beta-3.